A 301-amino-acid polypeptide reads, in one-letter code: MKIAVLSRNPRLYSTRRLVEAGVERGHEMVVIDTLRAYMNIASHKPQIHYRGKPLEGFDAVIPRIGASVTFYGCAVLRQFEMMGVFPLNESVAIARSRDKLRSLQLLSRRGIGLPVTGFAHSPDDIPDLIDMVNGAPLVIKVLEGTQGIGVVLCETATAAESVIEAFMGLKQNIMVQEYIKEAGGADIRCFVVGDKVIAAMKRQAKPGEFRSNLHRGGSASLIKITPEERMTALRAAKVMGLSVAGVDILRSNHGPLVMEVNSSPGLEGIETTTGKNVAGIIIEHLEKNGGPNMTRTKGKG.

The 184-residue stretch at 104 to 287 folds into the ATP-grasp domain; it reads LQLLSRRGIG…VAGIIIEHLE (184 aa). ATP is bound by residues Lys141, 178–179, Asp187, and 211–213; these read EY and RSN. Mg(2+) contacts are provided by Asp248, Glu260, and Asn262. Mn(2+) is bound by residues Asp248, Glu260, and Asn262.

Belongs to the RimK family. Mg(2+) serves as cofactor. The cofactor is Mn(2+).

This chain is Probable alpha-L-glutamate ligase, found in Pseudomonas fluorescens (strain SBW25).